The sequence spans 232 residues: Sec-independent protein translocase protein TatB (232 aa).

A helical transmembrane segment spans residues 1–21 (MFDIGFGELMLLFVIGLVVLG). Disordered regions lie at residues 108-129 (EPHT…GVTP) and 176-232 (AAST…NNDR). Low complexity-rich tracts occupy residues 189-203 (ADSA…ATPA) and 214-232 (RAAT…NNDR).

It belongs to the TatB family. In terms of assembly, the Tat system comprises two distinct complexes: a TatABC complex, containing multiple copies of TatA, TatB and TatC subunits, and a separate TatA complex, containing only TatA subunits. Substrates initially bind to the TatABC complex, which probably triggers association of the separate TatA complex to form the active translocon.

The protein resides in the cell inner membrane. Functionally, part of the twin-arginine translocation (Tat) system that transports large folded proteins containing a characteristic twin-arginine motif in their signal peptide across membranes. Together with TatC, TatB is part of a receptor directly interacting with Tat signal peptides. TatB may form an oligomeric binding site that transiently accommodates folded Tat precursor proteins before their translocation. The chain is Sec-independent protein translocase protein TatB from Sodalis glossinidius (strain morsitans).